The sequence spans 300 residues: Pantoate--beta-alanine ligase (300 aa).

43 to 50 (MGYLHSGH) is an ATP binding site. H50 (proton donor) is an active-site residue. Q74 lines the (R)-pantoate pocket. Residue Q74 coordinates beta-alanine. Residue 162-165 (GQKD) coordinates ATP. Q168 serves as a coordination point for (R)-pantoate. Residues I191 and 199–202 (KSSR) each bind ATP.

It belongs to the pantothenate synthetase family. In terms of assembly, homodimer.

It localises to the cytoplasm. The enzyme catalyses (R)-pantoate + beta-alanine + ATP = (R)-pantothenate + AMP + diphosphate + H(+). Its pathway is cofactor biosynthesis; (R)-pantothenate biosynthesis; (R)-pantothenate from (R)-pantoate and beta-alanine: step 1/1. Its function is as follows. Catalyzes the condensation of pantoate with beta-alanine in an ATP-dependent reaction via a pantoyl-adenylate intermediate. This chain is Pantoate--beta-alanine ligase (panC), found in Dictyostelium discoideum (Social amoeba).